Here is a 287-residue protein sequence, read N- to C-terminus: Ribosomal RNA small subunit methyltransferase I (287 aa).

It belongs to the methyltransferase superfamily. RsmI family.

The protein localises to the cytoplasm. The catalysed reaction is cytidine(1402) in 16S rRNA + S-adenosyl-L-methionine = 2'-O-methylcytidine(1402) in 16S rRNA + S-adenosyl-L-homocysteine + H(+). Functionally, catalyzes the 2'-O-methylation of the ribose of cytidine 1402 (C1402) in 16S rRNA. The protein is Ribosomal RNA small subunit methyltransferase I of Helicobacter pylori (strain ATCC 700392 / 26695) (Campylobacter pylori).